The chain runs to 182 residues: Translation initiation factor IF-3 (182 aa).

The protein belongs to the IF-3 family. As to quaternary structure, monomer.

It localises to the cytoplasm. IF-3 binds to the 30S ribosomal subunit and shifts the equilibrium between 70S ribosomes and their 50S and 30S subunits in favor of the free subunits, thus enhancing the availability of 30S subunits on which protein synthesis initiation begins. The sequence is that of Translation initiation factor IF-3 from Tropheryma whipplei (strain TW08/27) (Whipple's bacillus).